A 310-amino-acid polypeptide reads, in one-letter code: Zinc finger protein 42 homolog (310 aa).

The segment covering 1 to 15 has biased composition (basic residues); sequence MSQQLKKRAKTRHQK. The interval 1 to 35 is disordered; the sequence is MSQQLKKRAKTRHQKGLGGRAPSGAKPRQGKSSQD. 4 consecutive C2H2-type zinc fingers follow at residues 188 to 212, 217 to 239, 245 to 269, and 275 to 299; these read IACPQSGCTRKLRNRAALRKHLLIH, HVCAECGKAFVESSKLKRHFLVH, FRCTFEGCGKRFSLDFNLRTHVRIH, and FVCPFQGCNRRFIQSNNLKAHILTH. Glycyl lysine isopeptide (Lys-Gly) (interchain with G-Cter in ubiquitin) cross-links involve residues K231 and K233.

Belongs to the krueppel C2H2-type zinc-finger protein family. In terms of processing, polyubiquitinated by RNF12, leading to proteasomal degradation. In terms of tissue distribution, expressed in kidney, epidermal keratinocytes, prostate epithelial cells, bronchial and small airway lung epithelial cells (at protein level). Expressed in malignant kidney and several carcinoma cell lines (at protein level). Expressed in embryonic stem cells, kidney, epidermal keratinocytes, prostate epithelial cells, bronchial and small airway lung epithelial cells. Expressed in embryonal carcinomas, seminomas, malignant kidney and several carcinoma cell lines.

It is found in the nucleus. In terms of biological role, involved in the reprogramming of X-chromosome inactivation during the acquisition of pluripotency. Required for efficient elongation of TSIX, a non-coding RNA antisense to XIST. Binds DXPas34 enhancer within the TSIX promoter. Involved in ES cell self-renewal. In Homo sapiens (Human), this protein is Zinc finger protein 42 homolog (ZFP42).